The chain runs to 304 residues: MAGRSERLVITGAGGQLGSHLTAQAAREGRDMLALTSSQWDITDPAAAERIIRHGDVVINCAAYTDVDGAESNEAVAYAVNATGPQHLARACARVGARLIHVSTDYVFDGDFGGAEPRPYEPTDETAPQGVYARSKLAGEQAVLAAFPEAAVVRTAWVYTGGTGKDFVAVMRRLAAGHGRVDVVDDQTGSPTYVADLAEALLALADAGVRGRVLHAANEGVVSRFGQARAVFEECGADPQRVRPVSSAQFPRPAPRSSYSALSSRQWALAGLTPLRHWRSALATALAAPANSTSIDRRLPSTRD.

NADH is bound by residues 15–17 (GQL), 41–42 (DI), and 63–65 (AYT). Residues 16–17 (QL), 41–42 (DI), and 63–65 (AYT) each bind NADPH. 104–105 (TD) provides a ligand contact to dTDP-beta-L-rhamnose. Residues Tyr-132 and Lys-136 each contribute to the NADH site. Tyr-132 and Lys-136 together coordinate NADPH. Catalysis depends on Tyr-132, which acts as the Proton donor/acceptor. Residue Trp-157 participates in dTDP-beta-L-rhamnose binding.

This sequence belongs to the dTDP-4-dehydrorhamnose reductase family. Mg(2+) serves as cofactor.

The enzyme catalyses dTDP-beta-L-rhamnose + NADP(+) = dTDP-4-dehydro-beta-L-rhamnose + NADPH + H(+). Its pathway is carbohydrate biosynthesis; dTDP-L-rhamnose biosynthesis. Involved in the biosynthesis of the dTDP-L-rhamnose which is a component of the critical linker, D-N-acetylglucosamine-L-rhamnose disaccharide, which connects the galactan region of arabinogalactan to peptidoglycan via a phosphodiester linkage. Catalyzes the reduction of dTDP-6-deoxy-L-lyxo-4-hexulose to yield dTDP-L-rhamnose. This is dTDP-4-dehydrorhamnose reductase from Mycobacterium tuberculosis (strain CDC 1551 / Oshkosh).